A 405-amino-acid chain; its full sequence is Type III polyketide synthase 10 (405 aa).

Residues 1–18 (MVSTNAGGIASKQASSMA) are compositionally biased toward polar residues. The tract at residues 1–20 (MVSTNAGGIASKQASSMAPN) is disordered. The Nucleophile role is filled by C170.

This sequence belongs to the thiolase-like superfamily. Chalcone/stilbene synthases family. In terms of assembly, interacts with STS1. In terms of tissue distribution, expressed in adult flowers.

The protein resides in the endoplasmic reticulum. In terms of biological role, plant type III polyketide synthases (PKSs) that catalyzes the condensation of fatty acyl-CoA with malonyl-CoA to generate triketide and tetraketide alpha-pyrones, the main components of pollen exine and potential sporopollenin precursors. May be involved in the synthesis of sporopollenin precursors in tapetal cells to regulate pollen wall formation. Required for exine and Ubisch body formation in anthers. Does not possess chalcone synthase (CHS) activity in vitro with the substrates 4-coumaroyl-CoA and malonyl-CoA. The chain is Type III polyketide synthase 10 from Oryza sativa subsp. japonica (Rice).